Here is a 927-residue protein sequence, read N- to C-terminus: Isoleucine--tRNA ligase (927 aa).

The 'HIGH' region signature appears at 57-67 (PYANGHIHIGH). Glu561 provides a ligand contact to L-isoleucyl-5'-AMP. The short motif at 602-606 (KMSKS) is the 'KMSKS' region element. Lys605 contacts ATP. Positions 897, 900, 917, and 920 each coordinate Zn(2+).

The protein belongs to the class-I aminoacyl-tRNA synthetase family. IleS type 1 subfamily. As to quaternary structure, monomer. Zn(2+) is required as a cofactor.

The protein localises to the cytoplasm. The catalysed reaction is tRNA(Ile) + L-isoleucine + ATP = L-isoleucyl-tRNA(Ile) + AMP + diphosphate. Catalyzes the attachment of isoleucine to tRNA(Ile). As IleRS can inadvertently accommodate and process structurally similar amino acids such as valine, to avoid such errors it has two additional distinct tRNA(Ile)-dependent editing activities. One activity is designated as 'pretransfer' editing and involves the hydrolysis of activated Val-AMP. The other activity is designated 'posttransfer' editing and involves deacylation of mischarged Val-tRNA(Ile). This chain is Isoleucine--tRNA ligase, found in Syntrophotalea carbinolica (strain DSM 2380 / NBRC 103641 / GraBd1) (Pelobacter carbinolicus).